Here is a 179-residue protein sequence, read N- to C-terminus: Large ribosomal subunit protein uL5 (179 aa).

Belongs to the universal ribosomal protein uL5 family. Part of the 50S ribosomal subunit; part of the 5S rRNA/L5/L18/L25 subcomplex. Contacts the 5S rRNA and the P site tRNA. Forms a bridge to the 30S subunit in the 70S ribosome.

Functionally, this is one of the proteins that bind and probably mediate the attachment of the 5S RNA into the large ribosomal subunit, where it forms part of the central protuberance. In the 70S ribosome it contacts protein S13 of the 30S subunit (bridge B1b), connecting the 2 subunits; this bridge is implicated in subunit movement. Contacts the P site tRNA; the 5S rRNA and some of its associated proteins might help stabilize positioning of ribosome-bound tRNAs. The polypeptide is Large ribosomal subunit protein uL5 (Variovorax paradoxus (strain S110)).